Consider the following 308-residue polypeptide: Protein UL135 (308 aa).

Residues 1 to 22 (MVWLWLGVGLLGGTGLASLVLA) form the signal peptide. Positions 105 to 274 (KPEFPPARFE…TEPTTLPIVS (170 aa)) are disordered. Positions 126 to 145 (SIGRSPSHCSSSSSLSSSAS) are enriched in low complexity. Pro residues-rich tracts occupy residues 152–163 (QPPPSWKPPPPP) and 219–238 (PVTP…PRNP).

It belongs to the HCMV UL135 family. Interacts with host components of the WAVE2 complex ABI1, NAP1 and WAVE2. Also interacts with host ABI2 and TLN1.

The protein resides in the host cell membrane. It is found in the host Golgi apparatus. Remodels the host actin cytoskeleton in order to impair immune recognition of infected cells. Mechanistically, interacts with members of the host WAVE2 complex and redirects the complex to the plasma membrane. In turn, the efficiency of immune synapse formation is greatly reduced. The polypeptide is Protein UL135 (UL135) (Human cytomegalovirus (strain Merlin) (HHV-5)).